Consider the following 418-residue polypeptide: UDP-N-acetylglucosamine 1-carboxyvinyltransferase (418 aa).

22–23 lines the phosphoenolpyruvate pocket; sequence KN. Arginine 92 contacts UDP-N-acetyl-alpha-D-glucosamine. Cysteine 116 acts as the Proton donor in catalysis. Cysteine 116 bears the 2-(S-cysteinyl)pyruvic acid O-phosphothioketal mark. UDP-N-acetyl-alpha-D-glucosamine-binding positions include 121-125, aspartate 305, and isoleucine 327; that span reads RPVDL.

This sequence belongs to the EPSP synthase family. MurA subfamily.

Its subcellular location is the cytoplasm. It carries out the reaction phosphoenolpyruvate + UDP-N-acetyl-alpha-D-glucosamine = UDP-N-acetyl-3-O-(1-carboxyvinyl)-alpha-D-glucosamine + phosphate. The protein operates within cell wall biogenesis; peptidoglycan biosynthesis. In terms of biological role, cell wall formation. Adds enolpyruvyl to UDP-N-acetylglucosamine. In Acidiphilium cryptum (strain JF-5), this protein is UDP-N-acetylglucosamine 1-carboxyvinyltransferase.